We begin with the raw amino-acid sequence, 201 residues long: Histidine biosynthesis bifunctional protein HisIE (201 aa).

A phosphoribosyl-AMP cyclohydrolase region spans residues 1-114 (MLTAQQIEKL…FAPAQTEWGF (114 aa)). The interval 115–201 (LYQLEKLLAS…SCVIRRLRER (87 aa)) is phosphoribosyl-ATP pyrophosphohydrolase.

The protein in the N-terminal section; belongs to the PRA-CH family. It in the C-terminal section; belongs to the PRA-PH family.

The protein resides in the cytoplasm. It catalyses the reaction 1-(5-phospho-beta-D-ribosyl)-ATP + H2O = 1-(5-phospho-beta-D-ribosyl)-5'-AMP + diphosphate + H(+). The catalysed reaction is 1-(5-phospho-beta-D-ribosyl)-5'-AMP + H2O = 1-(5-phospho-beta-D-ribosyl)-5-[(5-phospho-beta-D-ribosylamino)methylideneamino]imidazole-4-carboxamide. The protein operates within amino-acid biosynthesis; L-histidine biosynthesis; L-histidine from 5-phospho-alpha-D-ribose 1-diphosphate: step 2/9. It functions in the pathway amino-acid biosynthesis; L-histidine biosynthesis; L-histidine from 5-phospho-alpha-D-ribose 1-diphosphate: step 3/9. In Photorhabdus laumondii subsp. laumondii (strain DSM 15139 / CIP 105565 / TT01) (Photorhabdus luminescens subsp. laumondii), this protein is Histidine biosynthesis bifunctional protein HisIE.